The following is a 355-amino-acid chain: Replication-associated protein (355 aa).

A CRESS-DNA virus Rep endonuclease domain is found at 11 to 114 (LHRTANTFLT…PLALFERGTF (104 aa)). Positions 18-21 (FLTY) match the RCR-1 motif. A divalent metal cation-binding residues include E52, H60, and H62. Residues 60 to 62 (HLH) carry the RCR-2 motif. Y100 serves as the catalytic For DNA cleavage activity. The RCR-3 signature appears at 100–103 (YILK). E104 provides a ligand contact to a divalent metal cation. Positions 175-187 (SANKLFPDIQEEF) are oligomerization. 229 to 236 (GPTRTGKS) provides a ligand contact to ATP. Residues 252-270 (VDWSSYNEDAIYNIVDDIP) are transactivation. Residues 292–303 (KYGKKKKVQMKS) carry the Nuclear localization signal motif.

The protein belongs to the geminiviridae Rep protein family. Homooligomer. Rep binds to repeated DNA motifs (iterons). Forms the O-complex, which is a Rep-DNA complex involved in the initiation of RCR. Part of the C- and V-complexes which are RepA-Rep-DNA complexes involved in the c-sense and v-sense transcription. Requires Mg(2+) as cofactor. It depends on Mn(2+) as a cofactor.

The protein localises to the host nucleus. Its function is as follows. Essential for the replication of viral ssDNA. The closed circular ssDNA genome is first converted to a superhelical dsDNA. Rep binds a specific region at the genome origin of replication. It introduces an endonucleolytic nick within the conserved sequence 5'-TAATATTAC-3' in the intergenic region of the genome present in all geminiviruses, thereby initiating the rolling circle replication (RCR). Following cleavage, binds covalently to the 5'-phosphate of DNA as a tyrosyl ester. The cleavage gives rise to a free 3'-OH that serves as a primer for the cellular DNA polymerase. The polymerase synthesizes the (+) strand DNA by rolling circle mechanism. After one round of replication, a Rep-catalyzed nucleotidyl transfer reaction releases a circular single-stranded virus genome, thereby terminating the replication. Displays origin-specific DNA cleavage, nucleotidyl transferase, ATPase and helicase activities. Acts as an inhibitor of C-sense gene transcription. The chain is Replication-associated protein from Maize streak virus genotype D (isolate Raw) (MSV).